The chain runs to 418 residues: Light-independent protochlorophyllide reductase subunit N (418 aa).

Residues Cys17, Cys42, and Cys103 each coordinate [4Fe-4S] cluster.

The protein belongs to the BchN/ChlN family. As to quaternary structure, protochlorophyllide reductase is composed of three subunits; ChlL, ChlN and ChlB. Forms a heterotetramer of two ChlB and two ChlN subunits. [4Fe-4S] cluster is required as a cofactor.

The catalysed reaction is chlorophyllide a + oxidized 2[4Fe-4S]-[ferredoxin] + 2 ADP + 2 phosphate = protochlorophyllide a + reduced 2[4Fe-4S]-[ferredoxin] + 2 ATP + 2 H2O. Its pathway is porphyrin-containing compound metabolism; chlorophyll biosynthesis (light-independent). In terms of biological role, component of the dark-operative protochlorophyllide reductase (DPOR) that uses Mg-ATP and reduced ferredoxin to reduce ring D of protochlorophyllide (Pchlide) to form chlorophyllide a (Chlide). This reaction is light-independent. The NB-protein (ChlN-ChlB) is the catalytic component of the complex. This is Light-independent protochlorophyllide reductase subunit N from Prochlorococcus marinus (strain SARG / CCMP1375 / SS120).